A 97-amino-acid chain; its full sequence is Citrate lyase acyl carrier protein (97 aa).

Serine 14 is modified (O-(phosphoribosyl dephospho-coenzyme A)serine).

The protein belongs to the CitD family. As to quaternary structure, oligomer with a subunit composition of (alpha,beta,gamma)6.

Its subcellular location is the cytoplasm. Functionally, covalent carrier of the coenzyme of citrate lyase. This chain is Citrate lyase acyl carrier protein, found in Lactobacillus acidophilus (strain ATCC 700396 / NCK56 / N2 / NCFM).